We begin with the raw amino-acid sequence, 159 residues long: Putative phosphatidylinositol-3-phosphatase (159 aa).

The N-terminal stretch at 1 to 16 (MKRPSFLPVLIGTGFG) is a signal peptide. The next 4 membrane-spanning stretches (helical) occupy residues 30–50 (LLAS…ALLW), 54–74 (ALVV…ESCW), 104–124 (WYVI…PLGV), and 134–154 (VGVM…IAVA).

It is found in the membrane. It carries out the reaction a 1,2-diacyl-sn-glycero-3-phospho-(1D-myo-inositol-3-phosphate) + H2O = a 1,2-diacyl-sn-glycero-3-phospho-(1D-myo-inositol) + phosphate. In terms of biological role, may be responsible for the conversion of phosphatidylinositol phosphate diacylglycerol (PIP-DAG) to phosphatidylinositol diacylglycerol (PI-DAG), making it a key enzyme in the inositol glycerophospholipid biosynthesis pathway. The chain is Putative phosphatidylinositol-3-phosphatase from Bacteroides thetaiotaomicron (strain ATCC 29148 / DSM 2079 / JCM 5827 / CCUG 10774 / NCTC 10582 / VPI-5482 / E50).